The sequence spans 427 residues: Trigger factor (427 aa).

The PPIase FKBP-type domain occupies 160–240 (GDTLIGDVTK…VKEVKRLELP (81 aa)).

The protein belongs to the FKBP-type PPIase family. Tig subfamily.

It localises to the cytoplasm. The enzyme catalyses [protein]-peptidylproline (omega=180) = [protein]-peptidylproline (omega=0). Involved in protein export. Acts as a chaperone by maintaining the newly synthesized protein in an open conformation. Functions as a peptidyl-prolyl cis-trans isomerase. The protein is Trigger factor of Chlorobaculum parvum (strain DSM 263 / NCIMB 8327) (Chlorobium vibrioforme subsp. thiosulfatophilum).